The sequence spans 195 residues: MTPTLLSAFWTYTLITAMTPGPNNILALSSATSHGFRQSTRVLAGMSLGFLIVMLLCAGISFSLAVIDPAAVHLLSWAGAAYIVWLAWKIATSPTKEDGLQAKPISFWASFALQFVNVKIILYGVTALSTFVLPQTQALSWVVGVSVLLAMIGTFGNVCWALAGHLFQRLFRQYGRQLNIVLALLLVYCAVRIFY.

Residues 1–7 are Periplasmic-facing; sequence MTPTLLS. A helical transmembrane segment spans residues 8–28; it reads AFWTYTLITAMTPGPNNILAL. Residues 29-46 lie on the Cytoplasmic side of the membrane; sequence SSATSHGFRQSTRVLAGM. A helical membrane pass occupies residues 47 to 67; it reads SLGFLIVMLLCAGISFSLAVI. Over 68–69 the chain is Periplasmic; sequence DP. The helical transmembrane segment at 70-90 threads the bilayer; sequence AAVHLLSWAGAAYIVWLAWKI. Topologically, residues 91–104 are cytoplasmic; the sequence is ATSPTKEDGLQAKP. The helical transmembrane segment at 105-125 threads the bilayer; the sequence is ISFWASFALQFVNVKIILYGV. Residues 126 to 141 are Periplasmic-facing; it reads TALSTFVLPQTQALSW. A helical membrane pass occupies residues 142–162; sequence VVGVSVLLAMIGTFGNVCWAL. At 163-176 the chain is on the cytoplasmic side; it reads AGHLFQRLFRQYGR. Residues 177–194 form a helical membrane-spanning segment; the sequence is QLNIVLALLLVYCAVRIF. Tyrosine 195 is a topological domain (periplasmic).

Belongs to the Rht family.

It is found in the cell inner membrane. It catalyses the reaction O-acetyl-L-serine(in) = O-acetyl-L-serine(out). The catalysed reaction is L-cysteine(in) = L-cysteine(out). Exporter of O-acetylserine (OAS) and cysteine. The protein is Cysteine/O-acetylserine efflux protein (eamB) of Escherichia coli O9:H4 (strain HS).